The sequence spans 190 residues: Superoxide dismutase [Fe] (190 aa).

The Fe cation site is built by H27, H75, D156, and H160.

The protein belongs to the iron/manganese superoxide dismutase family. Homodimer. Fe cation serves as cofactor.

It carries out the reaction 2 superoxide + 2 H(+) = H2O2 + O2. Functionally, destroys superoxide anion radicals which are normally produced within the cells and which are toxic to biological systems. The sequence is that of Superoxide dismutase [Fe] (SODB) from Entamoeba histolytica (strain ATCC 30459 / HM-1:IMSS / ABRM).